Here is a 385-residue protein sequence, read N- to C-terminus: Spermidine/putrescine import ATP-binding protein PotA (385 aa).

The ABC transporter domain occupies 6 to 238 (IEFKNVSKVF…PINHFVATFI (233 aa)). 40 to 47 (GSSGSGKS) is a binding site for ATP.

It belongs to the ABC transporter superfamily. Spermidine/putrescine importer (TC 3.A.1.11.1) family. The complex is composed of two ATP-binding proteins (PotA), two transmembrane proteins (PotB and PotC) and a solute-binding protein (PotD).

It localises to the cell membrane. The catalysed reaction is ATP + H2O + polyamine-[polyamine-binding protein]Side 1 = ADP + phosphate + polyamineSide 2 + [polyamine-binding protein]Side 1.. Part of the ABC transporter complex PotABCD involved in spermidine/putrescine import. Responsible for energy coupling to the transport system. The sequence is that of Spermidine/putrescine import ATP-binding protein PotA from Streptococcus sanguinis (strain SK36).